The primary structure comprises 354 residues: Uroporphyrinogen decarboxylase (354 aa).

Substrate-binding positions include 27 to 31, Asp77, Tyr154, Thr209, and His327; that span reads RQAGR.

It belongs to the uroporphyrinogen decarboxylase family. In terms of assembly, homodimer.

It is found in the cytoplasm. It carries out the reaction uroporphyrinogen III + 4 H(+) = coproporphyrinogen III + 4 CO2. Its pathway is porphyrin-containing compound metabolism; protoporphyrin-IX biosynthesis; coproporphyrinogen-III from 5-aminolevulinate: step 4/4. Its function is as follows. Catalyzes the decarboxylation of four acetate groups of uroporphyrinogen-III to yield coproporphyrinogen-III. The sequence is that of Uroporphyrinogen decarboxylase from Escherichia coli O7:K1 (strain IAI39 / ExPEC).